The sequence spans 198 residues: Ribonuclease HII (198 aa).

One can recognise an RNase H type-2 domain in the interval Asn-11–Val-198. 3 residues coordinate a divalent metal cation: Asp-17, Glu-18, and Asp-109.

The protein belongs to the RNase HII family. Mn(2+) serves as cofactor. Requires Mg(2+) as cofactor.

It is found in the cytoplasm. The catalysed reaction is Endonucleolytic cleavage to 5'-phosphomonoester.. In terms of biological role, endonuclease that specifically degrades the RNA of RNA-DNA hybrids. This is Ribonuclease HII from Yersinia enterocolitica serotype O:8 / biotype 1B (strain NCTC 13174 / 8081).